A 125-amino-acid polypeptide reads, in one-letter code: Holo-[acyl-carrier-protein] synthase (125 aa).

2 residues coordinate Mg(2+): Asp8 and Glu57.

It belongs to the P-Pant transferase superfamily. AcpS family. The cofactor is Mg(2+).

Its subcellular location is the cytoplasm. It carries out the reaction apo-[ACP] + CoA = holo-[ACP] + adenosine 3',5'-bisphosphate + H(+). Functionally, transfers the 4'-phosphopantetheine moiety from coenzyme A to a Ser of acyl-carrier-protein. This Geobacter sp. (strain M21) protein is Holo-[acyl-carrier-protein] synthase.